The chain runs to 861 residues: Leucine--tRNA ligase (861 aa).

The 'HIGH' region motif lies at 42 to 52; that stretch reads PYPSGRLHMGH. Residues 619–623 carry the 'KMSKS' region motif; that stretch reads KMSKS. Lysine 622 provides a ligand contact to ATP.

It belongs to the class-I aminoacyl-tRNA synthetase family.

It is found in the cytoplasm. It catalyses the reaction tRNA(Leu) + L-leucine + ATP = L-leucyl-tRNA(Leu) + AMP + diphosphate. This is Leucine--tRNA ligase from Haemophilus ducreyi (strain 35000HP / ATCC 700724).